Consider the following 89-residue polypeptide: MISIDLTLKYTPIPISVQRKESEAAEALYQEIITAMRSPSPIVLELTCEKQTEKKVAVMSDQISGVIVSQKDGAAATGRAPGFFSAAES.

It belongs to the UPF0367 family.

This Rippkaea orientalis (strain PCC 8801 / RF-1) (Cyanothece sp. (strain PCC 8801)) protein is UPF0367 protein PCC8801_1959.